The following is a 254-amino-acid chain: MPIVCHQVPVLAGSATLATMGTLILCFGKPASYGKHSESVSSGVPLLPARIAWFLQELPSFVVSVGMLAWQPRSLFGPPGNVLLGLFSAHYFHRTFIYSLLTRGRPLSAVIFLKATAFCIGNGLLQAYYLVYCAEYPEEWYTDMRFSVGVFFFILGMGINIHSDCMLRQLRKPGEVIYRIPQGGLFTYVSGANFLGEIIEWMGYALATWSVPAFAFAFFTLCFLGMQAFYHHRFYLKMFKDYPKSRKALIPFIF.

4 helical membrane passes run 8-28 (VPVL…LCFG), 72-92 (PRSL…AHYF), 146-166 (FSVG…SDCM), and 206-226 (LATW…FLGM).

Belongs to the steroid 5-alpha reductase family.

The protein resides in the microsome membrane. It is found in the endoplasmic reticulum membrane. The enzyme catalyses a 3-oxo-5alpha-steroid + NADP(+) = a 3-oxo-Delta(4)-steroid + NADPH + H(+). The catalysed reaction is 17beta-hydroxy-5alpha-androstan-3-one + NADP(+) = testosterone + NADPH + H(+). It carries out the reaction 5alpha-pregnane-3,20-dione + NADP(+) = progesterone + NADPH + H(+). Converts testosterone (T) into 5-alpha-dihydrotestosterone (DHT) and progesterone or corticosterone into their corresponding 5-alpha-3-oxosteroids. It plays a central role in sexual differentiation and androgen physiology. The sequence is that of 3-oxo-5-alpha-steroid 4-dehydrogenase 2 (Srd5a2) from Mus musculus (Mouse).